The primary structure comprises 477 residues: 3-isopropylmalate dehydratase large subunit (477 aa).

[4Fe-4S] cluster is bound by residues Cys-352, Cys-413, and Cys-416.

It belongs to the aconitase/IPM isomerase family. LeuC type 1 subfamily. Heterodimer of LeuC and LeuD. The cofactor is [4Fe-4S] cluster.

It catalyses the reaction (2R,3S)-3-isopropylmalate = (2S)-2-isopropylmalate. It participates in amino-acid biosynthesis; L-leucine biosynthesis; L-leucine from 3-methyl-2-oxobutanoate: step 2/4. Its function is as follows. Catalyzes the isomerization between 2-isopropylmalate and 3-isopropylmalate, via the formation of 2-isopropylmaleate. The sequence is that of 3-isopropylmalate dehydratase large subunit from Pseudomonas putida (strain ATCC 47054 / DSM 6125 / CFBP 8728 / NCIMB 11950 / KT2440).